The chain runs to 552 residues: MIAFLRLLKILRVFARYRLDQLLPANLPLAATLLLLPFKLFPQPRLSRGERLRRACEDLGPIFVKFGQLLSTRPDLVPADIVLELNHLQDNVTPFSKGEFQRIVESSLGASVAEVFASFNIEPLASASVAQVHTAVLKDGREVVIKVIRPGIDKVIAQDIALLLRVARWVENNTLDGKRLHPVEIVEDYRTTIFDELDLQREAANGSQLRRNFLNSPLLYVPEVYWEYTRTNVLVMERIYGIPVTDLAALNAQQTDMKKLAERGVEIFFTQVFEHNFFHADMHPGNIFVAHEHPSAPQYIAVDMAIVGSLTRADQYYLARNLLAMFRRDYRQVAELHVESGWVPSHVRVEELEAAVRTVCEPIFEKPLKEISFAQVLLNLFRTARRFEMEVQPQLVLLQKTLLNIEGLGRQLYPDLDLWATAHPFLERWLKNRFHPKSLWRELKRYAPEWMEKFPQVPNLVFNGLQQLQNLGELAPRLEEATHAYKAQQQLARQRNRRRVITLLAFAGAIALAWPSLGEGIRHWANHFSFGDIPTASYLLAAIGLSAWLLKR.

A helical membrane pass occupies residues 22 to 42 (LLPANLPLAATLLLLPFKLFP). Residues 118 to 498 (SFNIEPLASA…QQLARQRNRR (381 aa)) enclose the Protein kinase domain. ATP contacts are provided by residues 124–132 (LASASVAQV) and K146. The active-site Proton acceptor is D281. 2 consecutive transmembrane segments (helical) span residues 501–521 (ITLL…GEGI) and 530–550 (FGDI…AWLL).

This sequence belongs to the ABC1 family. UbiB subfamily.

Its subcellular location is the cell inner membrane. It functions in the pathway cofactor biosynthesis; ubiquinone biosynthesis [regulation]. In terms of biological role, is probably a protein kinase regulator of UbiI activity which is involved in aerobic coenzyme Q (ubiquinone) biosynthesis. This Cellvibrio japonicus (strain Ueda107) (Pseudomonas fluorescens subsp. cellulosa) protein is Probable protein kinase UbiB.